The sequence spans 810 residues: Eukaryotic translation initiation factor 3 subunit C (810 aa).

Residues 1–11 are compositionally biased toward polar residues; it reads MSRFFATNYNY. The segment at 1–98 is disordered; sequence MSRFFATNYN…DSDESDEEDG (98 aa). Residues 12–33 are compositionally biased toward low complexity; that stretch reads DETSSSSEEDLLSSSEELLSSS. Acidic residues predominate over residues 34–58; that stretch reads EEGELSDDSLFNDESESESDFDSDD. Residues 605 to 780 form the PCI domain; it reads YHQHINLDLV…TYIVIEKGDE (176 aa).

It belongs to the eIF-3 subunit C family. In terms of assembly, component of the eukaryotic translation initiation factor 3 (eIF-3) complex.

It is found in the cytoplasm. Functionally, component of the eukaryotic translation initiation factor 3 (eIF-3) complex, which is involved in protein synthesis of a specialized repertoire of mRNAs and, together with other initiation factors, stimulates binding of mRNA and methionyl-tRNAi to the 40S ribosome. The eIF-3 complex specifically targets and initiates translation of a subset of mRNAs involved in cell proliferation. The chain is Eukaryotic translation initiation factor 3 subunit C from Candida glabrata (strain ATCC 2001 / BCRC 20586 / JCM 3761 / NBRC 0622 / NRRL Y-65 / CBS 138) (Yeast).